The sequence spans 65 residues: Large ribosomal subunit protein uL29 (65 aa).

This sequence belongs to the universal ribosomal protein uL29 family.

The chain is Large ribosomal subunit protein uL29 from Syntrophus aciditrophicus (strain SB).